The primary structure comprises 320 residues: (+)-corvol ether B synthase/(+)-corvol ether A synthase ((2E,6E)-farnesyl diphosphate cyclizing) (320 aa).

Positions 78 and 83 each coordinate Mg(2+). A DDXXXD motif motif is present at residues 78-83 (DDLFVD). Arg-171 contacts substrate. Mg(2+)-binding residues include Asn-217, Ser-221, and Glu-225.

Belongs to the terpene synthase family. The cofactor is Mg(2+).

The catalysed reaction is (2E,6E)-farnesyl diphosphate + H2O = (+)-corvol ether B + diphosphate. It carries out the reaction (2E,6E)-farnesyl diphosphate + H2O = (+)-corvol ether A + diphosphate. Its pathway is secondary metabolite biosynthesis; terpenoid biosynthesis. In terms of biological role, catalyzes the conversion of (2E,6E)-farnesyl diphosphate (FPP) into (+)-corvol ether A and (+)-corvol ether B via a 1,10-cyclization, which requires isomerization of FPP to nerolidyl diphosphate (NPP) and then abstraction of the pyrophosphate from intermediate NPP leading to a (E,Z)-germacradienyl (helminthogermacradienyl) cation. The preferred substrate is (2E,6E)-farnesyl diphosphate (FPP), however geranyl diphosphate (GPP) is also able to produce small amounts of several acyclic and cyclic monoterpenes, with linalool as the main product. This is (+)-corvol ether B synthase/(+)-corvol ether A synthase ((2E,6E)-farnesyl diphosphate cyclizing) from Kitasatospora setae (strain ATCC 33774 / DSM 43861 / JCM 3304 / KCC A-0304 / NBRC 14216 / KM-6054) (Streptomyces setae).